The following is a 151-amino-acid chain: uncharacterized protein (151 aa).

The tract at residues Met1–Arg151 is disordered. The segment covering Ser33 to Ser45 has biased composition (low complexity). Over residues Arg53–Arg64 the composition is skewed to basic residues. Over residues Ser108–Ser123 the composition is skewed to low complexity. Residues Ala126 to Pro141 show a composition bias toward basic and acidic residues.

This is an uncharacterized protein from Aotus trivirgatus (Three-striped night monkey).